We begin with the raw amino-acid sequence, 432 residues long: Trigger factor (432 aa).

Positions 163–248 constitute a PPIase FKBP-type domain; it reads GDIAVIDFEG…LKALNKKELP (86 aa).

It belongs to the FKBP-type PPIase family. Tig subfamily.

The protein localises to the cytoplasm. The catalysed reaction is [protein]-peptidylproline (omega=180) = [protein]-peptidylproline (omega=0). Functionally, involved in protein export. Acts as a chaperone by maintaining the newly synthesized protein in an open conformation. Functions as a peptidyl-prolyl cis-trans isomerase. The chain is Trigger factor from Thermoanaerobacter pseudethanolicus (strain ATCC 33223 / 39E) (Clostridium thermohydrosulfuricum).